The sequence spans 601 residues: MKTIISLIFIMFPLFVSAHNGNFYRADSRSPNEIKDLGGLYPRGYYDFFERGTPMSISLYDHARGAPSGNTRYDDGFVSTTTDIDSAHEIGQNILSGYTEYYIYLIAPAPNLLDVNAVLGRYSPHPQENEYSALGGIPWTQVIGWYVVNNGVLDRNIHRNRQFRADLFNNLSPALPSESYQFAGFEPEHPAWRQEPWINFAPPGCGRNVRLTKHINQQDCSNSQEELVYKKLQDLRTQFKVDKKLKLVNKTSSNNIIFPNHDFIREWVDLDGNGDLSYCGFTVDSDGSRKRIVCAHNNGNFTYSSINISLSDYGWPKGQRFIDANGDGLVDYCRVQYVWTHLYCSLSLPGQYFSLDKDAGYLDAGYNNSRAWAKVIGTNKYSFCRLTSNGYICTDIDSYSTAFKDDDQGWADSRYWMDIDGNGGDDYCRLVYNWTHLRCNLQGKDGLWKRVESKYLDGGYPSLRFKIKMTSNKDNYCRIVRNHRVMECAYVSDNGEFHNYSLNMPFSLYNKNDIQFIDIDGDNRDDICRYNSAPNTMECYLNQDKSFSQNKLVLYLSAKPISSLGSGSSKIIRTFNSEKNSSAYCYNAGYGTLRCDEFVIY.

An N-terminal signal peptide occupies residues 1 to 18; that stretch reads MKTIISLIFIMFPLFVSA. Residues 26–43 and glutamate 130 each bind NAD(+); that span reads ADSRSPNEIKDLGGLYPR. Residue glutamate 130 is part of the active site. Cysteine 205 and cysteine 220 are disulfide-bonded.

It belongs to the enterotoxin A family.

It is found in the secreted. The catalysed reaction is L-arginyl-[protein] + NAD(+) = N(omega)-(ADP-D-ribosyl)-L-arginyl-[protein] + nicotinamide + H(+). A probable mono(ADP-ribosyl)transferase, it may ADP-ribosylate Arg in target protein(s). Upon expression in yeast cells causes cell death. In Vibrio cholerae, this protein is NAD(+)--arginine ADP-ribosyltransferase Chelt.